The sequence spans 95 residues: Aspartyl/glutamyl-tRNA(Asn/Gln) amidotransferase subunit C (95 aa).

This sequence belongs to the GatC family. As to quaternary structure, heterotrimer of A, B and C subunits.

It catalyses the reaction L-glutamyl-tRNA(Gln) + L-glutamine + ATP + H2O = L-glutaminyl-tRNA(Gln) + L-glutamate + ADP + phosphate + H(+). The enzyme catalyses L-aspartyl-tRNA(Asn) + L-glutamine + ATP + H2O = L-asparaginyl-tRNA(Asn) + L-glutamate + ADP + phosphate + 2 H(+). In terms of biological role, allows the formation of correctly charged Asn-tRNA(Asn) or Gln-tRNA(Gln) through the transamidation of misacylated Asp-tRNA(Asn) or Glu-tRNA(Gln) in organisms which lack either or both of asparaginyl-tRNA or glutaminyl-tRNA synthetases. The reaction takes place in the presence of glutamine and ATP through an activated phospho-Asp-tRNA(Asn) or phospho-Glu-tRNA(Gln). The sequence is that of Aspartyl/glutamyl-tRNA(Asn/Gln) amidotransferase subunit C from Pseudomonas syringae pv. syringae (strain B728a).